The primary structure comprises 378 residues: Putative monoglyceride lipase (378 aa).

The GXSXG motif lies at 97–101 (GHSMG). The active-site Nucleophile is serine 99. Residues aspartate 219 and histidine 249 each act as charge relay system in the active site. Residues 276 to 292 (PSETVKSEQETAVEHPK) are compositionally biased toward basic and acidic residues. Residues 276–350 (PSETVKSEQE…TSESTTVPET (75 aa)) are disordered. Residues 293–305 (PTATTSAPSASPT) show a composition bias toward low complexity. A Phosphoserine modification is found at serine 301. Positions 341–350 (TSESTTVPET) are enriched in polar residues.

Belongs to the AB hydrolase superfamily. Monoacylglycerol lipase family.

The protein resides in the lipid droplet. It is found in the cytoplasm. It localises to the endoplasmic reticulum. The protein localises to the mitochondrion outer membrane. It catalyses the reaction Hydrolyzes glycerol monoesters of long-chain fatty acids.. Its pathway is glycerolipid metabolism; triacylglycerol degradation. In terms of biological role, converts monoacylglycerides (MAG) to free fatty acids and glycerol. Has a strong preference for monounsaturated monoglycerides. Required for efficient degradation of MAG, short-lived intermediates of glycerolipid metabolism which may also function as lipid signaling molecules. Controls inactivation of the signaling lipid N-palmitoylethanolamine (PEA). Involved in fatty acid ethyl ester (FAEE) catabolism. FAEEs are non-oxidative metabolites of ethanol that are transiently incorporated into lipid droplets (LDs). Their mobilization by LD-resident FAEE hydrolases facilitates a controlled metabolism of these potentially toxic lipid metabolites. The protein is Putative monoglyceride lipase (mgl1) of Schizosaccharomyces pombe (strain 972 / ATCC 24843) (Fission yeast).